The chain runs to 468 residues: MTIVTRFAPSPTGFLHIGGARTALFNWLYARGHGGKFLLRIEDTDRARSTQAAVDAILDGLDWLGLEWDGDPISQFERKDRHAEVAHEMLRRGMAYRCYASPEELEAMKEEQRRQGLPMRYDGRWRDRDPSEAPAGVNPVIRLKAPQEGETVVRDHVQGEVRVQNAQLDDMILLRSDGTPTYLLAVVVDDYDMGVTHVVRGDDHLTNTFRQLQIYAAMGWTPPEYAHVPLIHGPDGAKLSKRHGALGVDAYRDMGYLPETMRNYLLRLGWSHGDDEIISTDQAKAWFNLDDIGRSPSRLDFAKLDNLNGHYIRQSDDARLVSLVVPMVEKRLGRPLTGSEHARLLAAMPGFKPRVKTLVELADGCLFLFALRPLAMDDKAAALLTPEAKAQLGELHALFSGLGDWTGGALEQAVRDFAERTGLKLGKVAQPLRAALTGSTVSPPIFEVAEVLGRTETLERIDDARKAG.

Positions 9–19 match the 'HIGH' region motif; that stretch reads PSPTGFLHIGG. A 'KMSKS' region motif is present at residues 238-242; it reads KLSKR. K241 lines the ATP pocket.

Belongs to the class-I aminoacyl-tRNA synthetase family. Glutamate--tRNA ligase type 1 subfamily. Monomer.

The protein resides in the cytoplasm. It carries out the reaction tRNA(Glu) + L-glutamate + ATP = L-glutamyl-tRNA(Glu) + AMP + diphosphate. Catalyzes the attachment of glutamate to tRNA(Glu) in a two-step reaction: glutamate is first activated by ATP to form Glu-AMP and then transferred to the acceptor end of tRNA(Glu). This Rhodospirillum centenum (strain ATCC 51521 / SW) protein is Glutamate--tRNA ligase 2.